Reading from the N-terminus, the 393-residue chain is Na(+)/H(+) antiporter NhaA 1 (393 aa).

The next 11 membrane-spanning stretches (helical) occupy residues 23-43 (AGGVSLMVAAALALIVANSPF), 58-78 (LSLTDWINDALMAVFFLLVGL), 96-116 (MLPGIAAAGGVILPAIIFTAF), 126-146 (GWAVPSATDIAFALGVLSLLG), 155-175 (VFLATLAILDDLAAVVIIAIF), 178-198 (AEISMPYLGGAFAAAIVLFVM), 224-244 (GVHATVAGVVTALMIPLKAAP), 265-285 (VAFIIVPIFGFANAGISFAGL), 298-318 (IMLGLFIGKQLGVFGAAWLAI), 334-354 (LYGVAVLCGIGFTMSIFIGLL), and 367-387 (IGVLAGSGLSAICGYILLRLV).

The protein belongs to the NhaA Na(+)/H(+) (TC 2.A.33) antiporter family.

The protein resides in the cell inner membrane. The catalysed reaction is Na(+)(in) + 2 H(+)(out) = Na(+)(out) + 2 H(+)(in). In terms of biological role, na(+)/H(+) antiporter that extrudes sodium in exchange for external protons. This Brucella anthropi (strain ATCC 49188 / DSM 6882 / CCUG 24695 / JCM 21032 / LMG 3331 / NBRC 15819 / NCTC 12168 / Alc 37) (Ochrobactrum anthropi) protein is Na(+)/H(+) antiporter NhaA 1.